Here is a 648-residue protein sequence, read N- to C-terminus: Adhesion G-protein coupled receptor G1 (648 aa).

A signal peptide spans 1–24 (MKQNPAKTARMWIIICLLFVLGQA). Residues 25-370 (TDNDRDFKMC…STVRHLKALT (346 aa)) are Extracellular-facing. A disulfide bond links Cys34 and Cys96. N-linked (GlcNAc...) asparagine glycosylation is found at Asn62, Asn91, Asn114, Asn146, Asn222, Asn262, and Asn286. A disulfide bond links Cys127 and Cys176. The GAIN-B domain occupies 214 to 361 (MDEEFTGHNF…AILVQVEQKS (148 aa)). Disulfide bonds link Cys313–Cys343 and Cys331–Cys345. Residues 313–361 (CVSWDTKQDNEVNWKDDGCDTVKINEEQTECHCNHLTYFAILVQVEQKS) form a GPS region. The interval 349-361 (TYFAILVQVEQKS) is stachel. Residues 371 to 391 (FITAVGCAVSLVSCLVLFYWL) form a helical membrane-spanning segment. Residues 392-408 (CKRRRGKKNQISLVHRG) are Cytoplasmic-facing. The chain crosses the membrane as a helical span at residues 409 to 429 (LVVAIFLLCLFFILTGILANV). The Extracellular portion of the chain corresponds to 430-443 (ANETVCQLTGSLLH). Asn431 carries N-linked (GlcNAc...) asparagine glycosylation. Residues 444–464 (YGLLSTLCWMAMEVFHTFLLV) traverse the membrane as a helical segment. Residues 465 to 471 (RKVFNSP) are Cytoplasmic-facing. The helical transmembrane segment at 472-492 (LPIWIFYLMGFGFPFLLVSIL) threads the bilayer. The Extracellular portion of the chain corresponds to 493 to 530 (LSVGDIYGERKIKPSDDVNNPYRMCWMTEGDKSQLAHY). Residues 531-551 (IINIGLLAVVVSSGLVMLFLV) form a helical membrane-spanning segment. Residues 552-563 (VREIRNRPDWKK) lie on the Cytoplasmic side of the membrane. A helical membrane pass occupies residues 564–586 (IHVAFLSIWGLTCLYGTTWALGF). Residues 587–595 (LDFGPFSEV) are Extracellular-facing. A helical membrane pass occupies residues 596-618 (TLFLFCIINSLQGFFLMLRYYAL). Topologically, residues 619-648 (ERMKKKDVSSSDGSSSGSSKQHMLQTNEKS) are cytoplasmic.

It belongs to the G-protein coupled receptor 2 family. LN-TM7 subfamily. Heterodimer of 2 chains generated by proteolytic processing; the large extracellular N-terminal fragment (ADGRG1 NT) and the membrane-bound C-terminal fragment (ADGRG1-CT) predominantly remain associated and non-covalently linked. Post-translationally, autoproteolytically cleaved into 2 fragments; the large extracellular N-terminal fragment (ADGRG1 NT) and the membrane-bound C-terminal fragment (ADGRG1 CT) predominantly remain associated and non-covalently linked.

It is found in the cell membrane. With respect to regulation, forms a heterodimer of 2 chains generated by proteolytic processing that remain associated through non-covalent interactions mediated by the GAIN-B domain. In the inactivated receptor, the Stachel sequence (also named stalk) is embedded in the GAIN-B domain, where it adopts a beta-strand conformation. On activation, the Stachel moves into the 7 transmembrane region and adopts a twisted hook-shaped configuration that forms contacts within the receptor, leading to coupling of a G-alpha protein, which activates signaling. The cleaved GAIN-B and N-terminal domains can then dissociate from the rest of the receptor. Functionally, adhesion G-protein coupled receptor (aGPCR), which is involved in oligodendrocyte development and maintenance of peripheral myelin. Ligand binding causes a conformation change that triggers signaling via guanine nucleotide-binding proteins (G proteins) and modulates the activity of downstream effectors, such as RhoA pathway. Adgrg1 is coupled to G(12) and/or G(13) G proteins (gna12 and gna13, respectively) and mediates the activation Rho small GTPases. Adgrg1-dependent RhoA signaling promotes timely radial sorting of axons. Required to establish proper myelin thickness and facilitate organization of the myelin sheath in the mature peripheral nervous system. This is Adhesion G-protein coupled receptor G1 from Danio rerio (Zebrafish).